A 437-amino-acid chain; its full sequence is UDP-sugar transporter protein SLC35A5 (437 aa).

At 1–21 (MKVIFLRQLKTRGMERKCSRR) the chain is on the cytoplasmic side. The chain crosses the membrane as a helical span at residues 22–42 (PGLGPPTLYTFLLGIIFITLS). Topologically, residues 43 to 65 (SSRILLVKYSANEENKYDYLPTT) are lumenal. A helical transmembrane segment spans residues 66-86 (VNVCSELMKLILCILVSLCVI). At 87 to 106 (KKEDHQSRHLRCTSWKEFSS) the chain is on the cytoplasmic side. A helical transmembrane segment spans residues 107-129 (FMKWSIPAFLYFLDNLIVFYVLS). Residues 130–132 (YLQ) are Lumenal-facing. The helical transmembrane segment at 133-155 (PAMAVIFSNFSIITTALLFRIVL) threads the bilayer. The Cytoplasmic portion of the chain corresponds to 156-158 (KRH). The chain crosses the membrane as a helical span at residues 159–179 (LNWIQWASLLILFLSIVALTA). The Lumenal portion of the chain corresponds to 180 to 241 (STKTSQHELA…TTARVFSHIR (62 aa)). Asn-217 carries N-linked (GlcNAc...) asparagine glycosylation. A helical membrane pass occupies residues 242 to 262 (LGLGHVLIIVQCFISSMANIY). The Cytoplasmic segment spans residues 263-276 (NEKILKEGTQLTES). The chain crosses the membrane as a helical span at residues 277-297 (IFIQNSKLYFFGIVFNGLTLV). The Lumenal segment spans residues 298-316 (LQSSNRDQIQNCGFFYGHN). Residues 317 to 337 (AFSVVLIFVTAFQGLSVAFIL) form a helical membrane-spanning segment. Topologically, residues 338–343 (KFLDNM) are cytoplasmic. A helical transmembrane segment spans residues 344–364 (FHVLMAQVTTVIITTVSVLVF). Over 365 to 367 (DFR) the chain is Lumenal. A helical membrane pass occupies residues 368-388 (PSLDFFLEAPSVLLSIFIYNA). At 389–437 (SKPQNLECAPKQERIRHLSGSLWERSSGDGEELERLTKLKSDDSDDDTL) the chain is on the cytoplasmic side. Residues Ser-407, Ser-429, and Ser-432 each carry the phosphoserine modification. The disordered stretch occupies residues 412–437 (ERSSGDGEELERLTKLKSDDSDDDTL). Residues 421–430 (LERLTKLKSD) show a composition bias toward basic and acidic residues.

Belongs to the nucleotide-sugar transporter family. SLC35A subfamily. In terms of assembly, probably forms homooligomers and heterooligomers with SLC35A1, SLC35A2, SLC35A3 and SLC35A4.

The protein resides in the golgi apparatus membrane. It carries out the reaction UMP(out) + UDP-alpha-D-glucuronate(in) = UMP(in) + UDP-alpha-D-glucuronate(out). The catalysed reaction is UMP(out) + UDP-N-acetyl-alpha-D-glucosamine(in) = UMP(in) + UDP-N-acetyl-alpha-D-glucosamine(out). It catalyses the reaction UDP-N-acetyl-alpha-D-galactosamine(in) + UMP(out) = UDP-N-acetyl-alpha-D-galactosamine(out) + UMP(in). Functionally, probable UDP-sugar:UMP transmembrane antiporter involved in UDP-alpha-D-glucuronate/UDP-GlcA, UDP-GlcNAc/UDP-N-acetyl-alpha-D-glucosamine and UDP-N-acetyl-alpha-D-galactosamine/UDP-GalNAc transport from the cytosol to the lumen of the Golgi. This chain is UDP-sugar transporter protein SLC35A5, found in Mus musculus (Mouse).